The primary structure comprises 206 residues: Small ribosomal subunit protein uS4 (206 aa).

Residues 1–16 (MTKRQESKYKIDRRMG) are compositionally biased toward basic and acidic residues. The disordered stretch occupies residues 1-46 (MTKRQESKYKIDRRMGENIWGRPKSPVNRREYGPGQHGQRRKGKLS). Positions 94–154 (RRLDAVVYRA…EKSKQLAIVL (61 aa)) constitute an S4 RNA-binding domain.

Belongs to the universal ribosomal protein uS4 family. In terms of assembly, part of the 30S ribosomal subunit. Contacts protein S5. The interaction surface between S4 and S5 is involved in control of translational fidelity.

Its function is as follows. One of the primary rRNA binding proteins, it binds directly to 16S rRNA where it nucleates assembly of the body of the 30S subunit. Functionally, with S5 and S12 plays an important role in translational accuracy. The sequence is that of Small ribosomal subunit protein uS4 from Parvibaculum lavamentivorans (strain DS-1 / DSM 13023 / NCIMB 13966).